Reading from the N-terminus, the 188-residue chain is PRA1 family protein 3 (188 aa).

M1 bears the N-acetylmethionine mark. Residues 1 to 35 (MDVNLAPLRAWDDFFPGSDRFARPDFRDISKWNNR) lie on the Cytoplasmic side of the membrane. 2 consecutive transmembrane segments (helical) span residues 36–56 (VVSNLLYYQTNYLVVAAMMIS) and 57–77 (VVGFLSPFNMILGGIIVVLVF). Over 78–92 (TGFVWAAHNKDILRR) the chain is Cytoplasmic. 2 consecutive transmembrane segments (helical) span residues 93-113 (MKKQYPTAFVMVVMLASYFLI) and 115-135 (MFGGVMVFVFGITFPLLLMFI). The interval 103–117 (MVVMLASYFLISMFG) is required for homodimer formation and heterodimer formation with ARL6IP1. Topologically, residues 136–188 (HASLRLRNLKNKLENKMEGIGLKKTPMGIILDALEQQEDSINKFADYISKARE) are cytoplasmic. The interval 136-188 (HASLRLRNLKNKLENKMEGIGLKKTPMGIILDALEQQEDSINKFADYISKARE) is targeting to endoplasmic reticulum membrane.

The protein belongs to the PRA1 family. As to quaternary structure, homodimer. Heterodimer with ARL6IP1. Forms multimers. Interacts with ARL6. Interacts with prenylated RAB1A and RAB3A. Interacts with SLC1A1/EAAC1. Interacts with RTN2 (via first transmembrane domain). Does not interact with VAMP1, VAMP2 or VAMP3. Ubiquitous. Most abundant in heart and brain. In the embryonic brain cortex, expressed in neurons and astrocytes.

Its subcellular location is the endoplasmic reticulum membrane. The protein localises to the cell membrane. It is found in the cytoplasm. It localises to the cytoskeleton. Regulates intracellular concentrations of taurine and glutamate. Negatively modulates SLC1A1/EAAC1 glutamate transport activity by decreasing its affinity for glutamate in a PKC activity-dependent manner. Plays a role in the retention of SLC1A1/EAAC1 in the endoplasmic reticulum. The protein is PRA1 family protein 3 (Arl6ip5) of Rattus norvegicus (Rat).